A 395-amino-acid chain; its full sequence is Probable nitrate/nitrite transporter NarK2 (395 aa).

The next 12 membrane-spanning stretches (helical) occupy residues 8 to 28, 45 to 65, 72 to 92, 98 to 118, 131 to 151, 157 to 177, 205 to 225, 244 to 266, 274 to 294, 301 to 321, 333 to 353, and 365 to 385; these read LVLA…IGPL, LLVA…GPLT, AMLI…GVAA, ALLV…AVGI, GFST…AFFT, WFGL…TAVV, LPVT…FVAF, AGAR…GWLS, VVLA…LQPP, ATFI…FAWV, VTGI…LVMG, and VGLL…ALHA.

The protein belongs to the major facilitator superfamily. Nitrate/nitrite porter (TC 2.A.1.8) family.

It localises to the cell membrane. Its function is as follows. Involved in excretion of nitrite produced by the dissimilatory reduction of nitrate. In Mycobacterium tuberculosis (strain CDC 1551 / Oshkosh), this protein is Probable nitrate/nitrite transporter NarK2 (narK2).